The sequence spans 560 residues: Dihydroxy-acid dehydratase (560 aa).

Position 78 (aspartate 78) interacts with Mg(2+). [2Fe-2S] cluster is bound at residue cysteine 119. Residues aspartate 120 and lysine 121 each coordinate Mg(2+). Lysine 121 carries the post-translational modification N6-carboxylysine. Cysteine 192 provides a ligand contact to [2Fe-2S] cluster. Residue glutamate 446 coordinates Mg(2+). Serine 472 acts as the Proton acceptor in catalysis.

Belongs to the IlvD/Edd family. Homodimer. The cofactor is [2Fe-2S] cluster. Mg(2+) serves as cofactor.

It catalyses the reaction (2R)-2,3-dihydroxy-3-methylbutanoate = 3-methyl-2-oxobutanoate + H2O. It carries out the reaction (2R,3R)-2,3-dihydroxy-3-methylpentanoate = (S)-3-methyl-2-oxopentanoate + H2O. It functions in the pathway amino-acid biosynthesis; L-isoleucine biosynthesis; L-isoleucine from 2-oxobutanoate: step 3/4. Its pathway is amino-acid biosynthesis; L-valine biosynthesis; L-valine from pyruvate: step 3/4. Its function is as follows. Functions in the biosynthesis of branched-chain amino acids. Catalyzes the dehydration of (2R,3R)-2,3-dihydroxy-3-methylpentanoate (2,3-dihydroxy-3-methylvalerate) into 2-oxo-3-methylpentanoate (2-oxo-3-methylvalerate) and of (2R)-2,3-dihydroxy-3-methylbutanoate (2,3-dihydroxyisovalerate) into 2-oxo-3-methylbutanoate (2-oxoisovalerate), the penultimate precursor to L-isoleucine and L-valine, respectively. This is Dihydroxy-acid dehydratase from Anaeromyxobacter sp. (strain K).